The primary structure comprises 103 residues: UPF0235 protein RHECIAT_CH0004196 (103 aa).

Belongs to the UPF0235 family.

The polypeptide is UPF0235 protein RHECIAT_CH0004196 (Rhizobium etli (strain CIAT 652)).